Consider the following 25-residue polypeptide: Neuromedin-U-25 (25 aa).

Asn25 is subject to Asparagine amide.

The protein belongs to the NmU family.

The protein resides in the secreted. Functionally, stimulates uterine smooth muscle contraction and causes selective vasoconstriction. The polypeptide is Neuromedin-U-25 (Rana temporaria (European common frog)).